The following is an 895-amino-acid chain: Iron-regulated surface determinant protein H (895 aa).

Residues methionine 1–alanine 40 form the signal peptide. The tract at residues glutamate 42 to proline 84 is disordered. Residues asparagine 53 to glutamine 62 show a composition bias toward low complexity. Over residues proline 63–lysine 81 the composition is skewed to polar residues. Residues aspartate 105–serine 232 enclose the NEAT 1 domain. A disordered region spans residues valine 239 to proline 324. Residues threonine 240–asparagine 276 are compositionally biased toward low complexity. Polar residues predominate over residues methionine 277–tyrosine 323. 2 consecutive NEAT domains span residues threonine 345–aspartate 471 and glutamine 543–aspartate 660. Disordered stretches follow at residues threonine 657–valine 705, isoleucine 752–lysine 782, and lysine 841–threonine 868. Polar residues-rich tracts occupy residues serine 663–glutamine 677 and alanine 687–lysine 697. Composition is skewed to basic and acidic residues over residues isoleucine 752 to alanine 764 and lysine 841 to lysine 854. A compositionally biased stretch (polar residues) spans leucine 855–threonine 868. The short motif at leucine 861–glycine 865 is the LPXTG sorting signal element. At threonine 864 the chain carries Pentaglycyl murein peptidoglycan amidated threonine. A propeptide spans glycine 865–lysine 895 (removed by sortase).

It belongs to the IsdH family.

Its subcellular location is the secreted. It localises to the cell wall. Binds human plasma haptoglobin-hemoglobin complexes, haptoglobin and hemoglobin. Binds haptoglobin-hemoglobin complexes with significantly higher affinity than haptoglobin alone. In Staphylococcus aureus (strain MSSA476), this protein is Iron-regulated surface determinant protein H (isdH).